The primary structure comprises 752 residues: MAP/microtubule affinity-regulating kinase 4 (752 aa).

Positions Met-1 to Arg-36 are disordered. The Protein kinase domain maps to Tyr-59 to Ile-310. ATP-binding positions include Ile-65–Val-73 and Lys-88. Asp-181 (proton acceptor) is an active-site residue. Residue Thr-214 is modified to Phosphothreonine; by LKB1. Residues Glu-324–Gly-368 form the UBA domain. Positions Ala-385 to Asn-614 are disordered. The span at Ser-391 to Ser-406 shows a compositional bias: low complexity. Ser-423 and Ser-543 each carry phosphoserine. The segment covering Pro-544–Ser-553 has biased composition (low complexity). The region spanning Ala-703–Leu-752 is the KA1 domain.

It belongs to the protein kinase superfamily. CAMK Ser/Thr protein kinase family. SNF1 subfamily. In terms of assembly, interacts with MAPT/TAU. Interacts with gamma-tubulin. Interacts with ODF2. Interacts with USP9X. Interacts with YWHAQ. Interacts with NLRP3; promoting NLRP3 recruitment to microtubule organizing center (MTOC). Requires Mg(2+) as cofactor. In terms of processing, ubiquitinated with 'Lys-29'- and 'Lys-33'-linked polyubiquitins which appear to impede LKB1-mediated phosphorylation. Deubiquitinated by USP9X. Phosphorylated at Thr-214 by STK11/LKB1 in complex with STE20-related adapter-alpha (STRADA) pseudo kinase and CAB39. Phosphorylated throughout the cell cycle. Ubiquitous. Isoform 2 is brain-specific. Expressed at highest levels in brain and testis. Also expressed in heart, lung, liver, muscle, kidney and spleen.

The protein localises to the cytoplasm. It localises to the cytoskeleton. The protein resides in the microtubule organizing center. Its subcellular location is the centrosome. It is found in the cilium basal body. The protein localises to the cilium axoneme. It localises to the cell projection. The protein resides in the dendrite. The catalysed reaction is L-seryl-[protein] + ATP = O-phospho-L-seryl-[protein] + ADP + H(+). The enzyme catalyses L-threonyl-[protein] + ATP = O-phospho-L-threonyl-[protein] + ADP + H(+). Its activity is regulated as follows. Activated by phosphorylation on Thr-214. Serine/threonine-protein kinase. Phosphorylates the microtubule-associated protein MAPT/TAU. Also phosphorylates the microtubule-associated proteins MAP2 and MAP4. Involved in regulation of the microtubule network, causing reorganization of microtubules into bundles. Required for the initiation of axoneme extension during cilium assembly. Regulates the centrosomal location of ODF2 and phosphorylates ODF2 in vitro. Plays a role in cell cycle progression, specifically in the G1/S checkpoint. Reduces neuronal cell survival. Plays a role in energy homeostasis by regulating satiety and metabolic rate. Promotes adipogenesis by activating JNK1 and inhibiting the p38MAPK pathway, and triggers apoptosis by activating the JNK1 pathway. Phosphorylates mTORC1 complex member RPTOR and acts as a negative regulator of the mTORC1 complex, probably due to disruption of the interaction between phosphorylated RPTOR and the RRAGA/RRAGC heterodimer which is required for mTORC1 activation. Involved in NLRP3 positioning along microtubules by mediating NLRP3 recruitment to microtubule organizing center (MTOC) upon inflammasome activation. The polypeptide is MAP/microtubule affinity-regulating kinase 4 (Homo sapiens (Human)).